A 706-amino-acid polypeptide reads, in one-letter code: Transmembrane and coiled-coil domains protein 2 (706 aa).

2 disordered regions span residues M1–T221 and V251–Q280. S6 is modified (phosphoserine). The segment covering G83–S94 has biased composition (basic residues). Residues S102 to Q112 are compositionally biased toward low complexity. Positions P120–R131 are enriched in basic and acidic residues. At R163 the chain carries Omega-N-methylarginine. Positions K330–G365 form a coiled coil. S435 is subject to Phosphoserine. The segment at A440–S459 is disordered. 2 positions are modified to phosphoserine: S461 and S467. Positions L464–P510 are disordered. Over residues S477–G487 the composition is skewed to low complexity. Residues S488 to L498 are compositionally biased toward gly residues. S500 bears the Phosphoserine mark. Residues G511–G630 adopt a coiled-coil conformation. Transmembrane regions (helical) follow at residues V646–T666 and A679–L699.

Belongs to the TEX28 family. As to quaternary structure, may form homodimers and heterodimers with TMCC2 or TMCC3 via the coiled-coil domains. Interacts with ribosomal proteins RPL4 and RPS6. Interacts with APOE and proteolytic processed C-terminal fragment C99 of the amyloid precursor protein (APP C99).

The protein localises to the endoplasmic reticulum membrane. In terms of biological role, may be involved in the regulation of the proteolytic processing of the amyloid precursor protein (APP) possibly also implicating APOE. The protein is Transmembrane and coiled-coil domains protein 2 of Mus musculus (Mouse).